The sequence spans 213 residues: Outer envelope pore protein 24B, chloroplastic (213 aa).

Residues 1–3 (MAM) are Cytoplasmic-facing. The beta stranded transmembrane segment at 4-13 (KASIKGKYDT) threads the bilayer. The Chloroplast intermembrane portion of the chain corresponds to 14-18 (DKTSG). A beta stranded membrane pass occupies residues 19–28 (IGSLAFNAGD). Topologically, residues 29 to 32 (IKLR) are cytoplasmic. The beta stranded transmembrane segment at 33–42 (ATMTDATLVA) threads the bilayer. Residues 43–55 (GPTLTGLALAVEK) lie on the Chloroplast intermembrane side of the membrane. Residues 56 to 64 (PGSFIVEYN) traverse the membrane as a beta stranded segment. Residues 65–70 (VPKKDV) are Cytoplasmic-facing. Residues 71–80 (RFQFMNTVRI) traverse the membrane as a beta stranded segment. Topologically, residues 81–93 (AEKPLNLTYIHSR) are chloroplast intermembrane. The chain crosses the membrane as a beta stranded span at residues 94-103 (ADNRTIVDGS). Residues 104–108 (LVIDS) lie on the Cytoplasmic side of the membrane. The beta stranded transmembrane segment at 109–118 (ANKLSANHMV) threads the bilayer. The Chloroplast intermembrane portion of the chain corresponds to 119-122 (GTNN). A beta stranded membrane pass occupies residues 123 to 132 (CKIKYTYAHG). At 133 to 144 (GLATFEPCYDLA) the chain is on the cytoplasmic side. The beta stranded transmembrane segment at 145-156 (KNTWDFAVSRRF) threads the bilayer. The Chloroplast intermembrane segment spans residues 157–159 (YSG). The beta stranded transmembrane segment at 160 to 168 (DNVRATYQT) threads the bilayer. Topologically, residues 169–170 (SS) are cytoplasmic. Residues 171 to 179 (KLLGMEWSR) traverse the membrane as a beta stranded segment. Over 180–201 (NNKASGFKVCASVNLADELKTP) the chain is Chloroplast intermembrane. A beta stranded transmembrane segment spans residues 202-211 (KLTAETTWNL). Topologically, residues 212–213 (EM) are cytoplasmic.

Belongs to the plastid outer envelope porin OEP24 (TC 1.B.28) family. Homooligomers form large rather nonselective pores in plastidial outer membranes.

The protein localises to the plastid. The protein resides in the etioplast membrane. It localises to the chloroplast outer membrane. Functionally, high-conductance voltage-dependent solute channel with a slight selectivity for cations transporting triosephosphates, dicarboxylic acids, ATP, inorganic phosphate (Pi), sugars, and positively or negatively charged amino acids. This chain is Outer envelope pore protein 24B, chloroplastic (OEP24B), found in Arabidopsis thaliana (Mouse-ear cress).